A 357-amino-acid polypeptide reads, in one-letter code: Heat-inducible transcription repressor HrcA (357 aa).

This sequence belongs to the HrcA family.

In terms of biological role, negative regulator of class I heat shock genes (grpE-dnaK-dnaJ and groELS operons). Prevents heat-shock induction of these operons. This Chlorobium luteolum (strain DSM 273 / BCRC 81028 / 2530) (Pelodictyon luteolum) protein is Heat-inducible transcription repressor HrcA.